We begin with the raw amino-acid sequence, 213 residues long: Large ribosomal subunit protein uL3 (213 aa).

Position 151 is an N5-methylglutamine (glutamine 151).

This sequence belongs to the universal ribosomal protein uL3 family. In terms of assembly, part of the 50S ribosomal subunit. Forms a cluster with proteins L14 and L19. Post-translationally, methylated by PrmB.

Its function is as follows. One of the primary rRNA binding proteins, it binds directly near the 3'-end of the 23S rRNA, where it nucleates assembly of the 50S subunit. The sequence is that of Large ribosomal subunit protein uL3 from Rhizobium etli (strain CIAT 652).